The sequence spans 398 residues: 1-deoxy-D-xylulose 5-phosphate reductoisomerase (398 aa).

Thr-10, Gly-11, Ser-12, Val-13, Gly-36, Lys-37, Asn-38, and Asn-124 together coordinate NADPH. A 1-deoxy-D-xylulose 5-phosphate-binding site is contributed by Lys-125. Glu-126 provides a ligand contact to NADPH. Residue Asp-150 participates in Mn(2+) binding. The 1-deoxy-D-xylulose 5-phosphate site is built by Ser-151, Glu-152, Ser-186, and His-209. Glu-152 contacts Mn(2+). Residue Gly-215 participates in NADPH binding. Residues Ser-222, Asn-227, Lys-228, and Glu-231 each coordinate 1-deoxy-D-xylulose 5-phosphate. Glu-231 contributes to the Mn(2+) binding site.

This sequence belongs to the DXR family. As to quaternary structure, homodimer. Requires Mg(2+) as cofactor. The cofactor is Mn(2+).

It carries out the reaction 2-C-methyl-D-erythritol 4-phosphate + NADP(+) = 1-deoxy-D-xylulose 5-phosphate + NADPH + H(+). The protein operates within isoprenoid biosynthesis; isopentenyl diphosphate biosynthesis via DXP pathway; isopentenyl diphosphate from 1-deoxy-D-xylulose 5-phosphate: step 1/6. Catalyzes the NADPH-dependent rearrangement and reduction of 1-deoxy-D-xylulose-5-phosphate (DXP) to 2-C-methyl-D-erythritol 4-phosphate (MEP). In Photorhabdus laumondii subsp. laumondii (strain DSM 15139 / CIP 105565 / TT01) (Photorhabdus luminescens subsp. laumondii), this protein is 1-deoxy-D-xylulose 5-phosphate reductoisomerase.